Reading from the N-terminus, the 200-residue chain is Pyridoxal 5'-phosphate synthase subunit PdxT (200 aa).

46-48 is a binding site for L-glutamine; that stretch reads GES. C78 serves as the catalytic Nucleophile. Residues R107 and 138–139 contribute to the L-glutamine site; that span reads IR. Catalysis depends on charge relay system residues H175 and E177.

Belongs to the glutaminase PdxT/SNO family. In the presence of PdxS, forms a dodecamer of heterodimers. Only shows activity in the heterodimer.

The catalysed reaction is aldehydo-D-ribose 5-phosphate + D-glyceraldehyde 3-phosphate + L-glutamine = pyridoxal 5'-phosphate + L-glutamate + phosphate + 3 H2O + H(+). It carries out the reaction L-glutamine + H2O = L-glutamate + NH4(+). The protein operates within cofactor biosynthesis; pyridoxal 5'-phosphate biosynthesis. Functionally, catalyzes the hydrolysis of glutamine to glutamate and ammonia as part of the biosynthesis of pyridoxal 5'-phosphate. The resulting ammonia molecule is channeled to the active site of PdxS. In Corynebacterium glutamicum (strain ATCC 13032 / DSM 20300 / JCM 1318 / BCRC 11384 / CCUG 27702 / LMG 3730 / NBRC 12168 / NCIMB 10025 / NRRL B-2784 / 534), this protein is Pyridoxal 5'-phosphate synthase subunit PdxT.